A 286-amino-acid polypeptide reads, in one-letter code: Protein HEAT-STRESS-ASSOCIATED 32 (286 aa).

This sequence belongs to the phosphosulfolactate synthase family.

Transactivator required, together with HSP101, for long-term acquired thermotolerance (LAT) maintenance, probably by regulating heat-inducible genes expression, thus being a cellular component of thermomemory. This chain is Protein HEAT-STRESS-ASSOCIATED 32, found in Arabidopsis thaliana (Mouse-ear cress).